We begin with the raw amino-acid sequence, 419 residues long: Odorant receptor 56a (419 aa).

At 1–41 the chain is on the cytoplasmic side; that stretch reads MFKVKDLLLSPTTFEDPIFGTHLRYFQWYGYVASKDQNRPL. The chain crosses the membrane as a helical span at residues 42–62; sequence LSLIRCTILTASIWLSCALML. Residues 63–76 lie on the Extracellular side of the membrane; it reads ARVFRGYENLNDGA. A helical membrane pass occupies residues 77-97; it reads TSYATAVQYFAVSIAMFNAYV. Over 98–137 the chain is Cytoplasmic; that stretch reads QRDKVISLLRVAHSDIQNLMHEADNREMELLVATQAYTRT. Residues 138-158 form a helical membrane-spanning segment; that stretch reads ITLLIWIPSVIAGLMAYSDCI. Over 159 to 196 the chain is Extracellular; the sequence is YRSLFLPKSVFNVPAVRRGEEHPILLFQLFPFGELCDN. Residues 197–217 form a helical membrane-spanning segment; that stretch reads FVVGYLGPWYALGLGITAIPL. Topologically, residues 218 to 292 are cytoplasmic; sequence WHTFITCLMK…FVQELQYLIC (75 aa). A helical transmembrane segment spans residues 293 to 313; the sequence is VPVMADFIIFSVLICFLFFAL. At 314–323 the chain is on the extracellular side; the sequence is TVGVPSKMDY. Residues 324 to 344 form a helical membrane-spanning segment; that stretch reads FFMFIYLFVMAGILWIYHWHA. Residues 345 to 389 lie on the Cytoplasmic side of the membrane; the sequence is TLIVECHDELSLAYFSCGWYNFEMPLQKMLVFMMMHAQRPMKMRA. A helical membrane pass occupies residues 390–410; the sequence is LLVDLNLRTFIDIGRGAYSYF. The Extracellular portion of the chain corresponds to 411-419; that stretch reads NLLRSSHLY.

The protein belongs to the insect chemoreceptor superfamily. Heteromeric odorant receptor channel (TC 1.A.69) family. Or30a subfamily. Interacts with Orco. Complexes exist early in the endomembrane system in olfactory sensory neurons (OSNs), coupling these complexes to the conserved ciliary trafficking pathway. In terms of tissue distribution, expressed in olfactory sensory neurons in the antenna.

The protein localises to the cell membrane. Functionally, odorant receptor which mediates acceptance or avoidance behavior, depending on its substrates. The odorant receptor repertoire encodes a large collection of odor stimuli that vary widely in identity, intensity, and duration. May form a complex with Orco to form odorant-sensing units, providing sensitive and prolonged odorant signaling and calcium permeability. Specific receptor for geosmin, a microbial odorant that constitutes an ecologically relevant stimulus that alerts flies to the presence of harmful microbes and induces avoidance behavior. This chain is Odorant receptor 56a (Or56a), found in Drosophila melanogaster (Fruit fly).